Reading from the N-terminus, the 457-residue chain is Chromosomal replication initiator protein DnaA (457 aa).

The domain I, interacts with DnaA modulators stretch occupies residues 1-73; sequence MANNYQTLYD…SKYLSEEFKK (73 aa). Positions 73 to 108 are domain II; that stretch reads KENIVNFEFIIDNEKLLINSNFLIKETNIKNRFNFS. The tract at residues 109–331 is domain III, AAA+ region; the sequence is DELLRYNFNN…GNLKQICFWA (223 aa). Residues Gly-156, Gly-158, Lys-159, and Thr-160 each coordinate ATP. Residues 332-457 are domain IV, binds dsDNA; the sequence is DNDTNKDLII…LQINLIINKF (126 aa).

Belongs to the DnaA family. In terms of assembly, oligomerizes as a right-handed, spiral filament on DNA at oriC.

It localises to the cytoplasm. In terms of biological role, plays an essential role in the initiation and regulation of chromosomal replication. ATP-DnaA binds to the origin of replication (oriC) to initiate formation of the DNA replication initiation complex once per cell cycle. Binds the DnaA box (a 9 base pair repeat at the origin) and separates the double-stranded (ds)DNA. Forms a right-handed helical filament on oriC DNA; dsDNA binds to the exterior of the filament while single-stranded (ss)DNA is stabiized in the filament's interior. The ATP-DnaA-oriC complex binds and stabilizes one strand of the AT-rich DNA unwinding element (DUE), permitting loading of DNA polymerase. After initiation quickly degrades to an ADP-DnaA complex that is not apt for DNA replication. Binds acidic phospholipids. This chain is Chromosomal replication initiator protein DnaA, found in Ureaplasma parvum serovar 3 (strain ATCC 700970).